The following is a 287-amino-acid chain: Ribonuclease Z (287 aa).

Residues histidine 64, histidine 66, aspartate 68, histidine 69, histidine 124, aspartate 191, and histidine 250 each contribute to the Zn(2+) site. Catalysis depends on aspartate 68, which acts as the Proton acceptor.

The protein belongs to the RNase Z family. Homodimer. Zn(2+) is required as a cofactor.

It catalyses the reaction Endonucleolytic cleavage of RNA, removing extra 3' nucleotides from tRNA precursor, generating 3' termini of tRNAs. A 3'-hydroxy group is left at the tRNA terminus and a 5'-phosphoryl group is left at the trailer molecule.. Functionally, zinc phosphodiesterase, which displays some tRNA 3'-processing endonuclease activity. Probably involved in tRNA maturation, by removing a 3'-trailer from precursor tRNA. The sequence is that of Ribonuclease Z from Pyrobaculum islandicum (strain DSM 4184 / JCM 9189 / GEO3).